Consider the following 39-residue polypeptide: Photosystem II reaction center protein Psb30 (39 aa).

Residues 12–32 (IFQLTFVGLIVIAGPIVIAVL) form a helical membrane-spanning segment.

The protein belongs to the Psb30/Ycf12 family. PSII is composed of 1 copy each of membrane proteins PsbA, PsbB, PsbC, PsbD, PsbE, PsbF, PsbH, PsbI, PsbJ, PsbK, PsbL, PsbM, PsbT, PsbX, PsbY, PsbZ, Psb30/Ycf12, peripheral proteins PsbO, CyanoQ (PsbQ), PsbU, PsbV and a large number of cofactors. It forms dimeric complexes.

It is found in the cellular thylakoid membrane. In terms of biological role, a core subunit of photosystem II (PSII), probably helps stabilize the reaction center. This is Photosystem II reaction center protein Psb30 from Crocosphaera subtropica (strain ATCC 51142 / BH68) (Cyanothece sp. (strain ATCC 51142)).